Reading from the N-terminus, the 365-residue chain is Phosphatidylcholine:ceramide cholinephosphotransferase 2 (365 aa).

Over residues 1–14 the composition is skewed to basic and acidic residues; the sequence is MDIIETAKLEEHLE. The segment at 1–52 is disordered; sequence MDIIETAKLEEHLENQPSDPTNTYARPAEPVEEENKNGNGKPKSLSSGLRKG. Polar residues predominate over residues 15 to 24; sequence NQPSDPTNTY. The next 4 membrane-spanning stretches (helical) occupy residues 80-100, 128-148, 159-179, and 206-226; these read GIAF…ITVV, FSVS…QWLF, FCFI…VTTL, and LISG…DFLF. The active site involves His229. The chain crosses the membrane as a helical span at residues 248-268; the sequence is FWWYHLICWLLSAAGIICILV. Residues His272 and Asp276 contribute to the active site. Residues 275–295 traverse the membrane as a helical segment; it reads IDVIIAYYITTRLFWWYHSMA. Residues 296 to 365 are Cytoplasmic-facing; that stretch reads NEKNLKVSSQ…KIGEDNEKST (70 aa). 4 S-palmitoyl cysteine lipidation sites follow: Cys331, Cys332, Cys343, and Cys348.

The protein belongs to the sphingomyelin synthase family. Palmitoylated on Cys-331, Cys-332, Cys-343 and Cys-348; which plays an important role in plasma membrane localization. As to expression, brain, heart, kidney, liver, muscle and stomach. Also expressed in a number of cell lines such as carcinoma HeLa cells, hepatoma Hep-G2 cells, and colon carcinoma Caco-2 cells.

Its subcellular location is the cell membrane. The protein localises to the golgi apparatus membrane. It catalyses the reaction an N-acylsphing-4-enine + a 1,2-diacyl-sn-glycero-3-phosphocholine = a sphingomyelin + a 1,2-diacyl-sn-glycerol. It carries out the reaction an N-acylsphinganine + a 1,2-diacyl-sn-glycero-3-phosphocholine = an N-acylsphinganine-1-phosphocholine + a 1,2-diacyl-sn-glycerol. The enzyme catalyses an N-acyl-(4R)-4-hydroxysphinganine + a 1,2-diacyl-sn-glycero-3-phosphocholine = an N-acyl-(4R)-4-hydroxysphinganine-phosphocholine + a 1,2-diacyl-sn-glycerol. The catalysed reaction is an N-acylsphinganine + a 1,2-diacyl-sn-glycero-3-phosphoethanolamine = an N-acylsphinganine-1-phosphoethanolamine + a 1,2-diacyl-sn-glycerol. It catalyses the reaction an N-acyl-(4R)-4-hydroxysphinganine + a 1,2-diacyl-sn-glycero-3-phosphoethanolamine = an N-acyl-(4R)-4-hydroxysphinganine-1-phosphoethanolamine + a 1,2-diacyl-sn-glycerol. It carries out the reaction an N-acylsphing-4-enine + a 1,2-diacyl-sn-glycero-3-phosphoethanolamine = an N-acylsphing-4-enine 1-phosphoethanolamine + a 1,2-diacyl-sn-glycerol. The enzyme catalyses 1,2-dihexadecanoyl-sn-glycero-3-phosphocholine + an N-acylsphing-4-enine = 1,2-dihexadecanoyl-sn-glycerol + a sphingomyelin. The catalysed reaction is 1-(9Z-octadecenoyl)-2-acyl-sn-3-glycerol + a sphingomyelin = a 1-(9Z-octadecenoyl)-2-acyl-sn-glycero-3-phosphocholine + an N-acylsphing-4-enine. It catalyses the reaction N-hexadecanoylsphinganine + a 1,2-diacyl-sn-glycero-3-phosphocholine = N-hexadecanoyl-sphinganine-1-phosphocholine + a 1,2-diacyl-sn-glycerol. It carries out the reaction N-hexadecanoyl-(4R)-hydroxysphinganine + a 1,2-diacyl-sn-glycero-3-phosphocholine = N-hexadecanoyl-(4R)-hydroxysphinganine-phosphocholine + a 1,2-diacyl-sn-glycerol. The enzyme catalyses N-hexadecanoylsphinganine + a 1,2-diacyl-sn-glycero-3-phosphoethanolamine = N-hexadecanoyl-sphinganine-1-phosphoethanolamine + a 1,2-diacyl-sn-glycerol. The catalysed reaction is N-hexadecanoyl-(4R)-hydroxysphinganine + a 1,2-diacyl-sn-glycero-3-phosphoethanolamine = N-hexadecanoyl-(4R)-hydroxysphinganine-1-phosphoethanolamine + a 1,2-diacyl-sn-glycerol. The protein operates within sphingolipid metabolism. Inhibited by bacterial PC-phospholipase C inhibitor D609. Its function is as follows. Sphingomyelin synthase that primarily contributes to sphingomyelin synthesis and homeostasis at the plasma membrane. Catalyzes the reversible transfer of phosphocholine moiety in sphingomyelin biosynthesis: in the forward reaction transfers phosphocholine head group of phosphatidylcholine (PC) on to ceramide (CER) to form ceramide phosphocholine (sphingomyelin, SM) and diacylglycerol (DAG) as by-product, and in the reverse reaction transfers phosphocholine from SM to DAG to form PC and CER. The direction of the reaction appears to depend on the levels of CER and DAG in the plasma membrane. Does not use free phosphorylcholine or CDP-choline as donors. Can also transfer phosphoethanolamine head group of phosphatidylethanolamine (PE) on to ceramide (CER) to form ceramide phosphoethanolamine (CPE). Regulates receptor-mediated signal transduction via mitogenic DAG and proapoptotic CER, as well as via SM, a structural component of membrane rafts that serve as platforms for signal transduction and protein sorting. To a lesser extent, plays a role in secretory transport via regulation of DAG pool at the Golgi apparatus and its downstream effects on PRKD1. Required for normal bone matrix mineralization. The polypeptide is Phosphatidylcholine:ceramide cholinephosphotransferase 2 (Homo sapiens (Human)).